Reading from the N-terminus, the 298-residue chain is Apolipoprotein E (298 aa).

An N-terminal signal peptide occupies residues 1–18 (MKVLWAALVVTLLAGCRA). A run of 8 repeats spans residues 74–94 (LLIE…EKEL), 95–116 (GPVA…QARL), 117–138 (GADM…QAML), 139–160 (GQSS…RKRL), 161–182 (QRDI…QEGA), 183–203 (ERGV…GRLQ), 204–221 (ALTS…GEQM), and 222–243 (RGRL…REQM). The segment at 95 to 243 (GPVAEDTKAR…DRLEEVREQM (149 aa)) is 8 X 22 AA approximate tandem repeats. Methionine sulfoxide is present on M137. S141 carries the phosphoserine modification. The tract at residues 151–161 (SHLRKMRKRLQ) is LDL and other lipoprotein receptors binding. 155–158 (KMRK) is a heparin binding site. Residues 203–271 (QALTSQPLQE…KSWFEPMMED (69 aa)) form a lipid-binding and lipoprotein association region. 217–224 (WGEQMRGR) contacts heparin. Residues 259 to 271 (ARLKSWFEPMMED) form a specificity for association with VLDL region.

It belongs to the apolipoprotein A1/A4/E family. In terms of assembly, homotetramer. May interact with ABCA1; functionally associated with ABCA1 in the biogenesis of HDLs. May interact with APP/A4 amyloid-beta peptide; the interaction is extremely stable in vitro but its physiological significance is unclear. May interact with MAPT. May interact with MAP2. In the cerebrospinal fluid, interacts with secreted SORL1. Interacts with PMEL; this allows the loading of PMEL luminal fragment on ILVs to induce fibril nucleation. Post-translationally, APOE exists as multiple glycosylated and sialylated glycoforms within cells and in plasma. The extent of glycosylation and sialylation are tissue and context specific. Glycated in plasma VLDL. In terms of processing, phosphorylated by FAM20C in the extracellular medium.

It is found in the secreted. It localises to the extracellular space. The protein localises to the extracellular matrix. Its subcellular location is the extracellular vesicle. The protein resides in the endosome. It is found in the multivesicular body. In terms of biological role, APOE is an apolipoprotein, a protein associating with lipid particles, that mainly functions in lipoprotein-mediated lipid transport between organs via the plasma and interstitial fluids. APOE is a core component of plasma lipoproteins and is involved in their production, conversion and clearance. Apolipoproteins are amphipathic molecules that interact both with lipids of the lipoprotein particle core and the aqueous environment of the plasma. As such, APOE associates with chylomicrons, chylomicron remnants, very low density lipoproteins (VLDL) and intermediate density lipoproteins (IDL) but shows a preferential binding to high-density lipoproteins (HDL). It also binds a wide range of cellular receptors including the LDL receptor/LDLR, the LDL receptor-related proteins LRP1, LRP2 and LRP8 and the very low-density lipoprotein receptor/VLDLR that mediate the cellular uptake of the APOE-containing lipoprotein particles. Finally, APOE also has a heparin-binding activity and binds heparan-sulfate proteoglycans on the surface of cells, a property that supports the capture and the receptor-mediated uptake of APOE-containing lipoproteins by cells. A main function of APOE is to mediate lipoprotein clearance through the uptake of chylomicrons, VLDLs, and HDLs by hepatocytes. APOE is also involved in the biosynthesis by the liver of VLDLs as well as their uptake by peripheral tissues ensuring the delivery of triglycerides and energy storage in muscle, heart and adipose tissues. By participating in the lipoprotein-mediated distribution of lipids among tissues, APOE plays a critical role in plasma and tissues lipid homeostasis. APOE is also involved in two steps of reverse cholesterol transport, the HDLs-mediated transport of cholesterol from peripheral tissues to the liver, and thereby plays an important role in cholesterol homeostasis. First, it is functionally associated with ABCA1 in the biogenesis of HDLs in tissues. Second, it is enriched in circulating HDLs and mediates their uptake by hepatocytes. APOE also plays an important role in lipid transport in the central nervous system, regulating neuron survival and sprouting. The chain is Apolipoprotein E (APOE) from Cavia tschudii (Montane guinea pig).